Consider the following 210-residue polypeptide: Thymidylate kinase (210 aa).

10–17 (GIDGCGKT) is an ATP binding site.

The protein belongs to the thymidylate kinase family.

It catalyses the reaction dTMP + ATP = dTDP + ADP. Phosphorylation of dTMP to form dTDP in both de novo and salvage pathways of dTTP synthesis. This Prochlorococcus marinus (strain MIT 9515) protein is Thymidylate kinase.